The primary structure comprises 732 residues: Alpha-galactosidase Mel36A (732 aa).

Residues 370–371 (DD), W415, R447, 480–484 (KWDMN), 530–533 (CSGG), and D552 each bind substrate. Catalysis depends on D482, which acts as the Nucleophile. D552 serves as the catalytic Proton donor.

The protein belongs to the glycosyl hydrolase 36 family. As to quaternary structure, homotetramer.

It carries out the reaction Hydrolysis of terminal, non-reducing alpha-D-galactose residues in alpha-D-galactosides, including galactose oligosaccharides, galactomannans and galactolipids.. Its function is as follows. Hydrolyzes the short-chain alpha-galactosaccharide raffinose. The sequence is that of Alpha-galactosidase Mel36A from Lactobacillus acidophilus (strain ATCC 700396 / NCK56 / N2 / NCFM).